The following is a 300-amino-acid chain: Alpha-ketoglutarate-dependent dioxygenase alkB homolog 4 (300 aa).

N-acetylalanine is present on Ala2. One can recognise a Fe2OG dioxygenase domain in the interval 148–272; that stretch reads PVEQCNLDYS…RVCATFRELS (125 aa). Residues His167, Asp169, and His252 each contribute to the Fe cation site. Residue Arg263 participates in 2-oxoglutarate binding.

Belongs to the alkB family. As to quaternary structure, interacts with ZFHX3, MLLT3, MLLT1, HSF4, EP300, TES, EIF3C, MTMR6 and PSMA6. Fe(2+) is required as a cofactor.

The protein resides in the cytoplasm. It is found in the nucleus. The protein localises to the nucleolus. Its subcellular location is the midbody. It catalyses the reaction an N(6)-methyl-2'-deoxyadenosine in DNA + 2-oxoglutarate + O2 = a 2'-deoxyadenosine in DNA + formaldehyde + succinate + CO2. The catalysed reaction is N(6)-methyl-L-lysyl-[protein] + 2-oxoglutarate + O2 = L-lysyl-[protein] + formaldehyde + succinate + CO2. Functionally, dioxygenase that mediates demethylation of actin monomethylated at 'Lys-84' (K84me1), thereby acting as a regulator of actomyosin-processes. Demethylation of actin K84me1 is required for maintaining actomyosin dynamics supporting normal cleavage furrow ingression during cytokinesis and cell migration. In addition to proteins, also demethylates DNA: specifically demethylates DNA methylated on the 6th position of adenine (N(6)-methyladenosine) DNA, thereby regulating Polycomb silencing. The chain is Alpha-ketoglutarate-dependent dioxygenase alkB homolog 4 from Mus musculus (Mouse).